Consider the following 557-residue polypeptide: Intraflagellar transport protein 56 (557 aa).

The interval 1–30 (MLLSRMKPAVGGEASTSSNEKKRKNKSKKI) is disordered. The span at 21-30 (KKRKNKSKKI) shows a compositional bias: basic residues. TPR repeat units follow at residues 60-93 (EHADLWTGFCAFHVGDHKRAMEEYKALTLRPDCP), 95-128 (DVWVYLGCALFFLGLYKEAEEAALKGSKTQLQNR), 154-187 (TEDQLSLASIHYMRSHYQEAIDIYKRILLQNREF), and 471-504 (ANDCYKMGQFYYAAKAFDALERLDPNPEYWEGKR).

It belongs to the IFT56 family. As to quaternary structure, component of the IFT complex B.

The protein localises to the cell projection. It localises to the cilium. Component of the intraflagellar transport (IFT) complex B required for transport of proteins in the motile cilium. Required for transport of specific ciliary cargo proteins related to motility, while it is neither required for IFT complex B assembly or motion nor for cilium assembly. Plays a key role in maintaining the integrity of the IFT complex B and the proper ciliary localization of the IFT complex B components. Essential for maintaining proper microtubule organization within the ciliary axoneme. This is Intraflagellar transport protein 56 from Danio rerio (Zebrafish).